The primary structure comprises 322 residues: DNA repair and recombination protein RadA (322 aa).

105–112 (GMYGSGKT) serves as a coordination point for ATP.

The protein belongs to the eukaryotic RecA-like protein family.

Its function is as follows. Involved in DNA repair and in homologous recombination. Binds and assemble on single-stranded DNA to form a nucleoprotein filament. Hydrolyzes ATP in a ssDNA-dependent manner and promotes DNA strand exchange between homologous DNA molecules. The polypeptide is DNA repair and recombination protein RadA (Methanococcus maripaludis (strain C7 / ATCC BAA-1331)).